Consider the following 587-residue polypeptide: Cyclic di-GMP phosphodiesterase PA2567 (587 aa).

The 130-residue stretch at 28–157 folds into the GAF domain; the sequence is DEVFEEILAA…LEHFARLVMA (130 aa). A GGDEF domain is found at 192–327; that stretch reads GALTVIAADL…GVGWARYNPP (136 aa). Residues 335-587 form the EAL domain; sequence AFTLLTSLSQ…PEQLEDWLRR (253 aa).

The enzyme catalyses 3',3'-c-di-GMP + H2O = 5'-phosphoguanylyl(3'-&gt;5')guanosine + H(+). In terms of biological role, phosphodiesterase (PDE) that catalyzes the hydrolysis of cyclic diguanylate (c-di-GMP) to 5'-pGpG. The polypeptide is Cyclic di-GMP phosphodiesterase PA2567 (Pseudomonas aeruginosa (strain ATCC 15692 / DSM 22644 / CIP 104116 / JCM 14847 / LMG 12228 / 1C / PRS 101 / PAO1)).